Consider the following 450-residue polypeptide: MERTTIMTLDFSKPGEAGYQSGFANEFATEALPGALPHARNSPQRAPYGLYAEQLSGTAFTAPRGHNRRSWLYRIRPAAVHRPFELVSGERRIVADFGDSGDVPPTPPNQLRWDPLPMPAQPTDFVDGWVTMAGNGSAAAMSGCAIHLYAANRSMRERFFYSADGELLIVPQEGRLFIMTELGRLDVEPFEIAVIPRGVRFAVALPDGRARGYVCENFGALLRLPDLGPIGSNGLANPRDFLTPNASYEDREGAFELVAKLNGRLWRADIDHSPFDVVAWHGNYAPYKYDLRHFNTIGSISYDHPDPSIFLVLQSQSDTPGVDAIDFVIFPPRWLAAEDTFRPPWFHRNVASEFMGLVHGVYDAKAEGFVPGGASLHNCMSGHGPDADTFEKASAIDTSRPNKVGDTMAFMFETRTLIRPTRFALDTAQLQANYFECWQGLKKHFNPEQR.

The active-site Proton acceptor is the His304. Fe cation is bound by residues His347 and Glu353. Residues Tyr362 and His383 each coordinate homogentisate. His383 contacts Fe cation.

This sequence belongs to the homogentisate dioxygenase family. Hexamer; dimer of trimers. It depends on Fe cation as a cofactor.

The enzyme catalyses homogentisate + O2 = 4-maleylacetoacetate + H(+). It participates in amino-acid degradation; L-phenylalanine degradation; acetoacetate and fumarate from L-phenylalanine: step 4/6. Its function is as follows. Involved in the catabolism of homogentisate (2,5-dihydroxyphenylacetate or 2,5-OH-PhAc), a central intermediate in the degradation of phenylalanine and tyrosine. Catalyzes the oxidative ring cleavage of the aromatic ring of homogentisate to yield maleylacetoacetate. The polypeptide is Homogentisate 1,2-dioxygenase (Burkholderia thailandensis (strain ATCC 700388 / DSM 13276 / CCUG 48851 / CIP 106301 / E264)).